The following is a 219-amino-acid chain: Protein-L-isoaspartate O-methyltransferase (219 aa).

Serine 67 is a catalytic residue.

The protein belongs to the methyltransferase superfamily. L-isoaspartyl/D-aspartyl protein methyltransferase family.

It localises to the cytoplasm. The enzyme catalyses [protein]-L-isoaspartate + S-adenosyl-L-methionine = [protein]-L-isoaspartate alpha-methyl ester + S-adenosyl-L-homocysteine. Catalyzes the methyl esterification of L-isoaspartyl residues in peptides and proteins that result from spontaneous decomposition of normal L-aspartyl and L-asparaginyl residues. It plays a role in the repair and/or degradation of damaged proteins. The protein is Protein-L-isoaspartate O-methyltransferase of Cereibacter sphaeroides (strain ATCC 17029 / ATH 2.4.9) (Rhodobacter sphaeroides).